The primary structure comprises 391 residues: Formate-dependent phosphoribosylglycinamide formyltransferase (391 aa).

Residues 20–21 and Glu80 each bind N(1)-(5-phospho-beta-D-ribosyl)glycinamide; that span reads EL. Residues Arg112, Lys153, 158–163, 193–196, and Glu201 contribute to the ATP site; these read SSGKGQ and EGFI. The region spanning 117–306 is the ATP-grasp domain; that stretch reads RLAAEDLQIP…EFALHVRAFL (190 aa). 2 residues coordinate Mg(2+): Glu265 and Glu277. N(1)-(5-phospho-beta-D-ribosyl)glycinamide-binding positions include Asp284, Lys354, and 361 to 362; that span reads RR.

It belongs to the PurK/PurT family. As to quaternary structure, homodimer.

It catalyses the reaction N(1)-(5-phospho-beta-D-ribosyl)glycinamide + formate + ATP = N(2)-formyl-N(1)-(5-phospho-beta-D-ribosyl)glycinamide + ADP + phosphate + H(+). Its pathway is purine metabolism; IMP biosynthesis via de novo pathway; N(2)-formyl-N(1)-(5-phospho-D-ribosyl)glycinamide from N(1)-(5-phospho-D-ribosyl)glycinamide (formate route): step 1/1. In terms of biological role, involved in the de novo purine biosynthesis. Catalyzes the transfer of formate to 5-phospho-ribosyl-glycinamide (GAR), producing 5-phospho-ribosyl-N-formylglycinamide (FGAR). Formate is provided by PurU via hydrolysis of 10-formyl-tetrahydrofolate. In Photobacterium profundum (strain SS9), this protein is Formate-dependent phosphoribosylglycinamide formyltransferase.